The sequence spans 152 residues: Deoxyuridine 5'-triphosphate nucleotidohydrolase (152 aa).

Substrate-binding positions include 71 to 73 (RSG), N84, 88 to 90 (LID), and M98.

The protein belongs to the dUTPase family. The cofactor is Mg(2+).

The enzyme catalyses dUTP + H2O = dUMP + diphosphate + H(+). The protein operates within pyrimidine metabolism; dUMP biosynthesis; dUMP from dCTP (dUTP route): step 2/2. Its function is as follows. This enzyme is involved in nucleotide metabolism: it produces dUMP, the immediate precursor of thymidine nucleotides and it decreases the intracellular concentration of dUTP so that uracil cannot be incorporated into DNA. This chain is Deoxyuridine 5'-triphosphate nucleotidohydrolase, found in Citrobacter koseri (strain ATCC BAA-895 / CDC 4225-83 / SGSC4696).